The sequence spans 31 residues: Photosystem II reaction center protein T (31 aa).

A helical membrane pass occupies residues 3-23 (AFSYTLLMALAAVTLFFAVAF).

The protein belongs to the PsbT family. PSII is composed of 1 copy each of membrane proteins PsbA, PsbB, PsbC, PsbD, PsbE, PsbF, PsbH, PsbI, PsbJ, PsbK, PsbL, PsbM, PsbT, PsbX, PsbY, Psb30/Ycf12, peripheral proteins PsbO, CyanoQ (PsbQ), PsbU, PsbV and a large number of cofactors. It forms dimeric complexes.

Its subcellular location is the cellular thylakoid membrane. Found at the monomer-monomer interface of the photosystem II (PS II) dimer, plays a role in assembly and dimerization of PSII. PSII is a light-driven water plastoquinone oxidoreductase, using light energy to abstract electrons from H(2)O, generating a proton gradient subsequently used for ATP formation. In Prochlorococcus marinus (strain MIT 9211), this protein is Photosystem II reaction center protein T.